The primary structure comprises 326 residues: DNA-binding death effector domain-containing protein 2 (326 aa).

The DED domain occupies 25 to 104 (SLHRMFEVVG…RHDLLPHLAR (80 aa)). Positions 104–109 (RKRRRP) match the Nuclear localization signal motif. Residues 104–194 (RKRRRPVSPE…PARPSSEGKV (91 aa)) are disordered. The span at 136-146 (SSSSANSQQGQ) shows a compositional bias: low complexity. The Bipartite nuclear localization signal signature appears at 155-173 (KRQRRSRGRPSGGARRRRR). Basic residues predominate over residues 155 to 174 (KRQRRSRGRPSGGARRRRRG). Positions 175–191 (APAAPQQQSEPARPSSE) are enriched in low complexity.

Interacts with CASP8, CASP10 and GTF3C3. Homodimerizes and heterodimerizes with DEDD. As to expression, expressed in most tissues. High levels were found in liver, kidney, heart, ovary, spleen, testes, skeletal muscle and peripheral blood leukocytes. Expression was absent or low in colon and small intestine. Expression is relatively high in the tumor cell lines chronic myologenous leukemia K-562 and the colorectal adenocarcinoma SW480. Expression is moderate in the cervical carcinoma HeLa, the Burkitt's lymphoma Raji, the lung carcinoma A-549, and the melanoma G-361. In contrast, two leukemia cell lines, HL-60 (promyelocytic leukemia) and MOLT-4 (lymphoblastic leukemia), show relatively low levels.

The protein resides in the nucleus. It is found in the nucleolus. May play a critical role in death receptor-induced apoptosis and may target CASP8 and CASP10 to the nucleus. May regulate degradation of intermediate filaments during apoptosis. May play a role in the general transcription machinery in the nucleus and might be an important regulator of the activity of GTF3C3. The polypeptide is DNA-binding death effector domain-containing protein 2 (DEDD2) (Homo sapiens (Human)).